Consider the following 462-residue polypeptide: MEKTMEKIVALAKARGFVYPGSEIYGGLANTWDYGNLGVELKNNVKKAWWTKFIQQNPYNVGVDCAILMNPQTWVASGHLGSFSDPLMDCKECRERFRADKIIEDYATEKNLTLEGSVDAWSHEEMSAYIEKNNIPCPTCGKHNFTDIRQFNLMFKTFQGVTEDAKNTVYLRPETAQGIFVNFKNVQRTSRKKIPFGIGQVGKSFRNEITPGNFTFRTREFEQMELEFFCEPDTDLEWFAYWKQFCIDWLQTLGIKEDEMRVRDHEKEELSFYSKATSDIEFLFPFGWGELWGIADRTDYDLTQHQNVSKEDLSYFDDEKGQRYIPYVIEPSLGADRVTLAFLCAAYDEEEIAEGDVRTVLHFHPAIAPVKIGVLPLSKKLSENAEKIYTDLSKYYNCEFDDRGNIGKRYRRQDEIGTPFCITYDFDSETDGAVTVRDRDTMEQERIKIEDLKAYFEKKFEF.

2 residues coordinate substrate: R98 and E174. Residues 206-208 (RNE), 216-221 (FRTREF), 290-291 (EL), and 334-337 (GADR) each bind ATP. 221-225 (FEQME) contacts substrate. Substrate is bound at residue 330–334 (EPSLG).

Belongs to the class-II aminoacyl-tRNA synthetase family. In terms of assembly, homodimer.

It localises to the cytoplasm. The enzyme catalyses tRNA(Gly) + glycine + ATP = glycyl-tRNA(Gly) + AMP + diphosphate. Its function is as follows. Catalyzes the attachment of glycine to tRNA(Gly). This is Glycine--tRNA ligase from Lachnoclostridium phytofermentans (strain ATCC 700394 / DSM 18823 / ISDg) (Clostridium phytofermentans).